Consider the following 854-residue polypeptide: MTEMPKKTGRKFKFFKFKGLGSLSNLPRSFSLRRSSASASIRSCPEPDTFEATQDDMVTLPKSPPAYARSSDMYSHMGTMPRPNIKKAQKQQAVQKAQEVSRESHLVSRRLPEPPDLEAAKEAGEGTEALLEDTAPSAVEVDPMRELEDLTVDTEKEQVPGDVSPERTAAELEAAGDYVKFSKEKYILDSSPEKLHKELEEELKLSSTDLRSHAWYHGRIPREVSETLVQRNGDFLIRDSLTSLGDYVLTCRWHNQALHFKINKVVVKAGESYTHIRYLFEQESFDHVPALVRYHVGSRKAVSEQSGAIIYCPVNRTFPLRYLEASYGLSQGSSKTASPASPSGSKGSHMKRRSITMTDGLTTDKVTRSDGCPNSTSLPHPRDSIRNCALSMDQIPDLHSPLSPISESPSSPAYSTVTRVHAPSATPSTSAQPASPVARRSSEPQLCPGNTPKPPGESDRAPHASPSHTLCKASPSPSLSSYSDPDSGHYCQLQPPVRGSREQAAGETPRKARGSGERQKELLENGVSDGEWGKTFTVPVVEATSSFNLATFQSQLIPKENRPLEVALLRKVKELLSEVDARTLARHVTKVDCLVARILGVTKEMQTLMGVRWGMELLTLPHGRQLRLDLLERFHTMSIMLAVDILGCTGSAEERAALLHKTIQLAAELRGTMGNMFSFAAVMGALEMAQISRLEQTWMTLRQRHTEGAILYEKKLKPFLKSLNEGKEGPPLSNTTFPHVLPFITLLECDSAPAEGPEPWGSTEHGVEVVLAHLEAARTVAHHGGLYHTNAEVKLQGFQARPELLEVFSTEFQMRLLWGSQGANSSQAWRYEKFDKVLTALSHKLEPAIRSSEL.

Ser-22 carries the post-translational modification Phosphoserine. Low complexity predominate over residues 34–43 (RSSASASIRS). Residues 34-129 (RSSASASIRS…AKEAGEGTEA (96 aa)) form a disordered region. Residues 99–124 (EVSRESHLVSRRLPEPPDLEAAKEAG) are compositionally biased toward basic and acidic residues. Positions 215–314 (WYHGRIPREV…QSGAIIYCPV (100 aa)) constitute an SH2 domain. Tyr-273 and Tyr-278 each carry phosphotyrosine. Disordered regions lie at residues 330–384 (SQGS…PRDS), 398–417 (LHSP…YSTV), and 422–520 (APSA…ERQK). Residues 333 to 347 (SSKTASPASPSGSKG) show a composition bias toward low complexity. A Phosphoserine modification is found at Ser-354. Low complexity-rich tracts occupy residues 400 to 415 (SPLS…PAYS), 422 to 436 (APSA…PASP), and 474 to 485 (SPSPSLSSYSDP). Ser-435 bears the Phosphoserine mark. The segment covering 508-520 (TPRKARGSGERQK) has biased composition (basic and acidic residues). The Ras-GEF domain occupies 580–848 (DARTLARHVT…TALSHKLEPA (269 aa)). A Phosphotyrosine modification is found at Tyr-787.

In terms of assembly, component of a complex comprised of SH2D3C, BCAR1/CAS, and CRK. Within the complex, interacts with CRK and (via C-terminus) with BCAR1/CAS (via C-terminus). Interacts with NEDD9/HEF1. Interacts with EPHB2. Interacts with NEDD9/HEF1. Interacts with BCAR1/CAS. Interacts with PTK2B. As to quaternary structure, interacts (via C-terminus) with BCAR1/CAS (via C-terminus). Interacts with IGF1. Phosphorylated by MAPK/ERK upon T-cell receptor stimulation in T-cells. In terms of tissue distribution, expressed in the olfactory bulb and olfactory sensory neurons (at protein level). Expressed in B cells (at protein level). Expressed in T lymphocytes. Expressed in hematopoietic cells from spleen, lymph node and thymus (at protein level). Expressed weakly in the lung (at protein level). As to expression, expressed in the brain, lung, kidney, and weakly expressed in the liver and lung (at protein level).

It localises to the cytoplasm. The protein resides in the cell membrane. The protein localises to the cell projection. It is found in the axon. Its subcellular location is the ruffle membrane. Acts as an adapter protein that mediates cell signaling pathways involved in cellular functions such as cell adhesion and migration, tissue organization, and the regulation of the immune response. Plays a role in integrin-mediated cell adhesion through BCAR1-CRK-RAPGEF1 signaling and activation of the small GTPase RAP1. Promotes cell migration and invasion through the extracellular matrix. Required for marginal zone B-cell development and thymus-independent type 2 immune responses. Mediates migration and adhesion of B cells in the splenic marginal zone via promoting hyperphosphorylation of NEDD9/CASL. Plays a role in CXCL13-induced chemotaxis of B-cells. Plays a role in the migration of olfactory sensory neurons (OSNs) into the forebrain and the innervation of the olfactory bulb by the OSN axons during development. Required for the efficient tyrosine phosphorylation of BCAR1 in OSN axons. In terms of biological role, important regulator of chemokine-induced, integrin-mediated T lymphocyte adhesion and migration, acting upstream of RAP1. Required for tissue-specific adhesion of T lymphocytes to peripheral tissues. Required for basal and CXCL2 stimulated serine-threonine phosphorylation of NEDD9. May be involved in the regulation of T-cell receptor-mediated IL2 production through the activation of the JNK pathway in T-cells. Functionally, may be involved in the BCAR1/CAS-mediated JNK activation pathway. The polypeptide is SH2 domain-containing protein 3C (Sh2d3c) (Mus musculus (Mouse)).